The chain runs to 571 residues: Sulfite reductase [NADPH] hemoprotein beta-component (571 aa).

Residues C435, C441, C480, and C484 each contribute to the [4Fe-4S] cluster site. Position 484 (C484) interacts with siroheme.

This sequence belongs to the nitrite and sulfite reductase 4Fe-4S domain family. As to quaternary structure, alpha(8)-beta(8). The alpha component is a flavoprotein, the beta component is a hemoprotein. The cofactor is siroheme. Requires [4Fe-4S] cluster as cofactor.

The catalysed reaction is hydrogen sulfide + 3 NADP(+) + 3 H2O = sulfite + 3 NADPH + 4 H(+). It participates in sulfur metabolism; hydrogen sulfide biosynthesis; hydrogen sulfide from sulfite (NADPH route): step 1/1. Its function is as follows. Component of the sulfite reductase complex that catalyzes the 6-electron reduction of sulfite to sulfide. This is one of several activities required for the biosynthesis of L-cysteine from sulfate. The protein is Sulfite reductase [NADPH] hemoprotein beta-component of Erwinia tasmaniensis (strain DSM 17950 / CFBP 7177 / CIP 109463 / NCPPB 4357 / Et1/99).